The sequence spans 467 residues: MLTATKDLVLAQSDNSWPTHFRASLYLGVPFIGAQLAQLAINTTDVLMVGQLGATQLAAIILATQVFFTIFIFGSGFANAVVPMVAQAQGRGDQVSVRRSVRMGMWVVLLYGVLTAPVLWMAEPILLFAGQKPEVAALAGEYLHIAQWAIFPSLIFMVLRAFLSGLERAGVILYVTLVTLVLNAALCYVLIFGHFGFPELGIFGAAVAALGVALLGAALTIGYIRRQPELHRFELFVRFWRPDWPAFGEVVHLGIPISVTILAEVSLFTVASLLMGTIGTIELAAHGIALQFASIAFMIPLGLAQAGTVRIGLAYGSGDMVGVKRAAIAVLTLGVGFAAVGSTIFALFPHELAGLYLDTRRPDAAEVLAFAGPLIVIAGAFQLVDGLQAIAAGMLRGLKDTTIPMILAMIAYWPIGFFCAWAFAFPLGFGGVGVWFGFVLGLASAALLLNWRFFRLLRRVSAAPAAS.

A run of 12 helical transmembrane segments spans residues 20 to 42, 57 to 79, 107 to 129, 144 to 163, 170 to 192, 202 to 224, 250 to 272, 292 to 314, 326 to 348, 368 to 390, 403 to 425, and 429 to 451; these read HFRA…LAIN, LAAI…GFAN, VVLL…LLFA, HIAQ…RAFL, GVIL…VLIF, IFGA…IGYI, VVHL…TVAS, FASI…IGLA, AAIA…FALF, LAFA…LQAI, IPMI…AFAF, and FGGV…LLNW.

It belongs to the multi antimicrobial extrusion (MATE) (TC 2.A.66.1) family.

It localises to the cell inner membrane. Functionally, multidrug efflux pump. This Rhizobium meliloti (strain 1021) (Ensifer meliloti) protein is Probable multidrug resistance protein NorM (norM).